The chain runs to 249 residues: uncharacterized protein (249 aa).

It belongs to the HAD-like hydrolase superfamily. CbbY/CbbZ/Gph/YieH family.

This is an uncharacterized protein from Schizosaccharomyces pombe (strain 972 / ATCC 24843) (Fission yeast).